The sequence spans 280 residues: Thiamine-phosphate synthase (280 aa).

The disordered stretch occupies residues 1–64 (MGWSGSPLTL…ATGRGGLRMT (64 aa)). Residues 42–55 (GRGELRSRERRGEA) are compositionally biased toward basic and acidic residues. 4-amino-2-methyl-5-(diphosphooxymethyl)pyrimidine contacts are provided by residues 104–108 (QLRCK) and Asn141. Mg(2+) is bound by residues Asp142 and Asp161. Residue Ser179 participates in 4-amino-2-methyl-5-(diphosphooxymethyl)pyrimidine binding. 205-207 (TPT) is a binding site for 2-[(2R,5Z)-2-carboxy-4-methylthiazol-5(2H)-ylidene]ethyl phosphate. Position 208 (Lys208) interacts with 4-amino-2-methyl-5-(diphosphooxymethyl)pyrimidine. Gly236 contributes to the 2-[(2R,5Z)-2-carboxy-4-methylthiazol-5(2H)-ylidene]ethyl phosphate binding site.

This sequence belongs to the thiamine-phosphate synthase family. It depends on Mg(2+) as a cofactor.

The enzyme catalyses 2-[(2R,5Z)-2-carboxy-4-methylthiazol-5(2H)-ylidene]ethyl phosphate + 4-amino-2-methyl-5-(diphosphooxymethyl)pyrimidine + 2 H(+) = thiamine phosphate + CO2 + diphosphate. The catalysed reaction is 2-(2-carboxy-4-methylthiazol-5-yl)ethyl phosphate + 4-amino-2-methyl-5-(diphosphooxymethyl)pyrimidine + 2 H(+) = thiamine phosphate + CO2 + diphosphate. It carries out the reaction 4-methyl-5-(2-phosphooxyethyl)-thiazole + 4-amino-2-methyl-5-(diphosphooxymethyl)pyrimidine + H(+) = thiamine phosphate + diphosphate. It functions in the pathway cofactor biosynthesis; thiamine diphosphate biosynthesis; thiamine phosphate from 4-amino-2-methyl-5-diphosphomethylpyrimidine and 4-methyl-5-(2-phosphoethyl)-thiazole: step 1/1. Condenses 4-methyl-5-(beta-hydroxyethyl)thiazole monophosphate (THZ-P) and 2-methyl-4-amino-5-hydroxymethyl pyrimidine pyrophosphate (HMP-PP) to form thiamine monophosphate (TMP). The chain is Thiamine-phosphate synthase from Deinococcus radiodurans (strain ATCC 13939 / DSM 20539 / JCM 16871 / CCUG 27074 / LMG 4051 / NBRC 15346 / NCIMB 9279 / VKM B-1422 / R1).